A 441-amino-acid chain; its full sequence is Amino-acid acetyltransferase (441 aa).

Residues 295-434 form the N-acetyltransferase domain; that stretch reads EQVRRATIND…QALYNYQRRS (140 aa).

This sequence belongs to the acetyltransferase family. ArgA subfamily. Homohexamer.

The protein resides in the cytoplasm. The catalysed reaction is L-glutamate + acetyl-CoA = N-acetyl-L-glutamate + CoA + H(+). It functions in the pathway amino-acid biosynthesis; L-arginine biosynthesis; N(2)-acetyl-L-ornithine from L-glutamate: step 1/4. The protein is Amino-acid acetyltransferase of Serratia proteamaculans (strain 568).